The sequence spans 490 residues: Probable cytosol aminopeptidase (490 aa).

Residues Lys257 and Asp262 each coordinate Mn(2+). Lys269 is an active-site residue. Asp281, Asp341, and Glu343 together coordinate Mn(2+). The active site involves Arg345.

It belongs to the peptidase M17 family. Requires Mn(2+) as cofactor.

It is found in the cytoplasm. The enzyme catalyses Release of an N-terminal amino acid, Xaa-|-Yaa-, in which Xaa is preferably Leu, but may be other amino acids including Pro although not Arg or Lys, and Yaa may be Pro. Amino acid amides and methyl esters are also readily hydrolyzed, but rates on arylamides are exceedingly low.. The catalysed reaction is Release of an N-terminal amino acid, preferentially leucine, but not glutamic or aspartic acids.. Functionally, presumably involved in the processing and regular turnover of intracellular proteins. Catalyzes the removal of unsubstituted N-terminal amino acids from various peptides. The sequence is that of Probable cytosol aminopeptidase from Prochlorococcus marinus (strain AS9601).